The primary structure comprises 1070 residues: DNA-directed RNA polymerase subunit beta (1070 aa).

Belongs to the RNA polymerase beta chain family. As to quaternary structure, in plastids the minimal PEP RNA polymerase catalytic core is composed of four subunits: alpha, beta, beta', and beta''. When a (nuclear-encoded) sigma factor is associated with the core the holoenzyme is formed, which can initiate transcription.

The protein localises to the plastid. The protein resides in the chloroplast. It catalyses the reaction RNA(n) + a ribonucleoside 5'-triphosphate = RNA(n+1) + diphosphate. In terms of biological role, DNA-dependent RNA polymerase catalyzes the transcription of DNA into RNA using the four ribonucleoside triphosphates as substrates. The sequence is that of DNA-directed RNA polymerase subunit beta from Nicotiana sylvestris (Wood tobacco).